We begin with the raw amino-acid sequence, 502 residues long: ATP synthase subunit alpha (502 aa).

An ATP-binding site is contributed by 169–176; the sequence is GDKQTGKT.

The protein belongs to the ATPase alpha/beta chains family. As to quaternary structure, F-type ATPases have 2 components, CF(1) - the catalytic core - and CF(0) - the membrane proton channel. CF(1) has five subunits: alpha(3), beta(3), gamma(1), delta(1), epsilon(1). CF(0) has three main subunits: a(1), b(2) and c(9-12). The alpha and beta chains form an alternating ring which encloses part of the gamma chain. CF(1) is attached to CF(0) by a central stalk formed by the gamma and epsilon chains, while a peripheral stalk is formed by the delta and b chains.

The protein resides in the cell membrane. The enzyme catalyses ATP + H2O + 4 H(+)(in) = ADP + phosphate + 5 H(+)(out). Produces ATP from ADP in the presence of a proton gradient across the membrane. The alpha chain is a regulatory subunit. The polypeptide is ATP synthase subunit alpha (Lachnoclostridium phytofermentans (strain ATCC 700394 / DSM 18823 / ISDg) (Clostridium phytofermentans)).